The following is an 86-amino-acid chain: Small ribosomal subunit protein bS16 (86 aa).

The protein belongs to the bacterial ribosomal protein bS16 family.

In Xanthomonas campestris pv. campestris (strain 8004), this protein is Small ribosomal subunit protein bS16.